Reading from the N-terminus, the 214-residue chain is Octanoyltransferase (214 aa).

The BPL/LPL catalytic domain occupies 35 to 211 (KSNMNFIWLG…IIHEEFNFNF (177 aa)). Residues 75–82 (RGGEVTCH), 142–144 (SIG), and 155–157 (GFS) contribute to the substrate site. The active-site Acyl-thioester intermediate is the Cys-173.

It belongs to the LipB family.

It is found in the cytoplasm. The catalysed reaction is octanoyl-[ACP] + L-lysyl-[protein] = N(6)-octanoyl-L-lysyl-[protein] + holo-[ACP] + H(+). The protein operates within protein modification; protein lipoylation via endogenous pathway; protein N(6)-(lipoyl)lysine from octanoyl-[acyl-carrier-protein]: step 1/2. In terms of biological role, catalyzes the transfer of endogenously produced octanoic acid from octanoyl-acyl-carrier-protein onto the lipoyl domains of lipoate-dependent enzymes. Lipoyl-ACP can also act as a substrate although octanoyl-ACP is likely to be the physiological substrate. The chain is Octanoyltransferase from Prochlorococcus marinus subsp. pastoris (strain CCMP1986 / NIES-2087 / MED4).